A 649-amino-acid polypeptide reads, in one-letter code: Threonine--tRNA ligase (649 aa).

A TGS domain is found at 1-60 (MHVTLPDGKQLDLQPGATALDAAKAIGPRLAQDALGATANGELTDLMTPLSDGASITLIT). Positions 248 to 544 (DHRKLGKELE…LIEHYAGDFP (297 aa)) are catalytic. Residues Cys-341, His-392, and His-521 each coordinate Zn(2+).

It belongs to the class-II aminoacyl-tRNA synthetase family. Homodimer. Zn(2+) is required as a cofactor.

It localises to the cytoplasm. The catalysed reaction is tRNA(Thr) + L-threonine + ATP = L-threonyl-tRNA(Thr) + AMP + diphosphate + H(+). Its function is as follows. Catalyzes the attachment of threonine to tRNA(Thr) in a two-step reaction: L-threonine is first activated by ATP to form Thr-AMP and then transferred to the acceptor end of tRNA(Thr). Also edits incorrectly charged L-seryl-tRNA(Thr). The chain is Threonine--tRNA ligase from Deinococcus radiodurans (strain ATCC 13939 / DSM 20539 / JCM 16871 / CCUG 27074 / LMG 4051 / NBRC 15346 / NCIMB 9279 / VKM B-1422 / R1).